The sequence spans 444 residues: MKHFEANFDGLVGPTHNYAGLSFGNVASLSNAALVSNPKAAAKQGLQKAKALADMGMVQGMLAPQERPDLYTLRRIGFSGSDANVLKQAAKEAPMLLNACCSASSMWTANAATVSPSADTRDGKLHFTPANLVDKLHRSIEPLTTGRILTATFSDPHYFHHHSHLPEHNSFGDEGAANQTRLCNEYGHAGVELFVYGQEATNPNAPKPQKYPARQTLEASMAVARLHQLEEDNCVFIQQNPDVIDQGVFHNDVIAVGNQNVLFYHEQAFLNTQHKIDEIKRKLDTELYFIEVPTAKVAINDAVKSYLFNTQIITLPSGEMAIIAPTDCQENPAVFAYLNELLTLNTPIKQVLYFDVKQSMQNGGGPACLRLRVAMNEMEVAAVNQHTLMNDALFARLNLWVDKHYRDRLTTQDLADPQLIIESRTALDELTQIMKLGSVYQFQR.

Residues 19–28 (AGLSFGNVAS), Asn-110, and 137–138 (HR) each bind substrate. Residue Glu-174 is part of the active site. Arg-214 is a binding site for substrate. His-250 is a catalytic residue. Residues Asp-252 and Asn-362 each contribute to the substrate site. Cys-368 acts as the Nucleophile in catalysis.

The protein belongs to the succinylarginine dihydrolase family. As to quaternary structure, homodimer.

The catalysed reaction is N(2)-succinyl-L-arginine + 2 H2O + 2 H(+) = N(2)-succinyl-L-ornithine + 2 NH4(+) + CO2. It functions in the pathway amino-acid degradation; L-arginine degradation via AST pathway; L-glutamate and succinate from L-arginine: step 2/5. In terms of biological role, catalyzes the hydrolysis of N(2)-succinylarginine into N(2)-succinylornithine, ammonia and CO(2). The protein is N-succinylarginine dihydrolase of Shewanella baltica (strain OS185).